A 213-amino-acid chain; its full sequence is Pyridoxine/pyridoxamine 5'-phosphate oxidase (213 aa).

FMN-binding positions include 60 to 65, 75 to 76, lysine 82, and glutamine 104; these read RMVLMK and YS. Residue lysine 65 participates in substrate binding. The substrate site is built by tyrosine 122 and arginine 126. FMN is bound by residues 139 to 140 and tryptophan 184; that span reads QS. 190 to 192 serves as a coordination point for substrate; sequence RLH. Residue arginine 194 coordinates FMN.

The protein belongs to the pyridoxamine 5'-phosphate oxidase family. As to quaternary structure, homodimer. It depends on FMN as a cofactor.

It catalyses the reaction pyridoxamine 5'-phosphate + O2 + H2O = pyridoxal 5'-phosphate + H2O2 + NH4(+). The enzyme catalyses pyridoxine 5'-phosphate + O2 = pyridoxal 5'-phosphate + H2O2. It functions in the pathway cofactor metabolism; pyridoxal 5'-phosphate salvage; pyridoxal 5'-phosphate from pyridoxamine 5'-phosphate: step 1/1. Its pathway is cofactor metabolism; pyridoxal 5'-phosphate salvage; pyridoxal 5'-phosphate from pyridoxine 5'-phosphate: step 1/1. Functionally, catalyzes the oxidation of either pyridoxine 5'-phosphate (PNP) or pyridoxamine 5'-phosphate (PMP) into pyridoxal 5'-phosphate (PLP). The protein is Pyridoxine/pyridoxamine 5'-phosphate oxidase of Nitrobacter winogradskyi (strain ATCC 25391 / DSM 10237 / CIP 104748 / NCIMB 11846 / Nb-255).